Consider the following 288-residue polypeptide: Protease HtpX homolog (288 aa).

2 helical membrane passes run 6-26 (TAFLMVALMLVFIAVGGYVGG) and 28-48 (QGMMIAFLMAAGMNIFSYFFS). His-130 contacts Zn(2+). Residue Glu-131 is part of the active site. Position 134 (His-134) interacts with Zn(2+). Helical transmembrane passes span 140 to 160 (ILTGSVAAILAGAIAMVANFA) and 179 to 199 (VIMLIIAVVMPLAATVIQMAI). Residue Glu-204 participates in Zn(2+) binding.

It belongs to the peptidase M48B family. It depends on Zn(2+) as a cofactor.

It is found in the cell inner membrane. This Campylobacter concisus (strain 13826) protein is Protease HtpX homolog.